We begin with the raw amino-acid sequence, 283 residues long: MAEITASLVKELRERTAAGMMECKKALVEANGDIELAIENMRKSGAIKAAKKAGNVAADGVIKTKIDGNYAVILEVNCQTDFVAKDGGFQAFADKVLDAAVAGKITDVDVLKAQFEEERVALVAKIGENINIRRVSALEGEVLGNYQHGARIGVLVAAKGADEELVKHLAMHVAASKPEFVKPEDVSAEVVDKEYQVQLEIAMQSGKPKEIAEKMVEGRMKKFTGEVSLTGQPFVMDPAKSVGQLLKEHNADVTNFIRFEVGEGIEKVETDFAAEVAAMSKQS.

The interval 80–83 (TDFV) is involved in Mg(2+) ion dislocation from EF-Tu.

The protein belongs to the EF-Ts family.

It is found in the cytoplasm. Associates with the EF-Tu.GDP complex and induces the exchange of GDP to GTP. It remains bound to the aminoacyl-tRNA.EF-Tu.GTP complex up to the GTP hydrolysis stage on the ribosome. This Pectobacterium carotovorum subsp. carotovorum (strain PC1) protein is Elongation factor Ts.